Consider the following 541-residue polypeptide: Cytochrome P450 monooxygenase claU (541 aa).

A helical transmembrane segment spans residues 12–32 (VIDTLVILFSTWAFLGLIRVI). Cys-480 lines the heme pocket.

Belongs to the cytochrome P450 family. Heme is required as a cofactor.

It is found in the membrane. Its pathway is secondary metabolite biosynthesis; terpenoid biosynthesis. Cytochrome P450 monooxygenase; part of the gene cluster that mediates the biosynthesis of clavilactone A, a meroterpenoid that features a unique benzo-fused ten-membered carbocyclic ring unit with an alpha,beta-epoxy-gamma-lactone moiety, forming an intriguing 10/5/3 tricyclic nested skeleton. Cytochrome P450 monooxygenases claO, claP, claQ, claU, and claW are close orthologs, suggesting that a redundant function or pseudogenes are present in the cla cluster. These monoxygenases are not involved in clavilactone A biosynthesis nor its modification. ClaR, ClaS and ClaT are sufficient to produce clavilactone A. The biosynthesis begins with the prenyltransferase claS that transfers geranyl pyrophosphate (GPP) to hydroquinone to produces geranylhydroquinone. The cytochrome P450 monooxygenase claR then catalyzes the diradical coupling reaction between the intramolecular hydroquinone and allyl moieties to form the benzo-fused ten-membered carbocyclic ring unit of wigantol. Finally the cytochrome P450 monooxygenase claT exquisitely and stereoselectively assembles the alpha,beta-epoxy-gamma-lactone moiety, producing clavilactone A via arnebinol A. This chain is Cytochrome P450 monooxygenase claU, found in Ampulloclitocybe clavipes (Club foot).